The sequence spans 649 residues: Lipolysis-stimulated lipoprotein receptor (649 aa).

Positions 1-16 (MQQDGLGVGTRNGSGK) are enriched in gly residues. The disordered stretch occupies residues 1–21 (MQQDGLGVGTRNGSGKGRSVH). The Extracellular segment spans residues 1-259 (MQQDGLGVGT…PGFQAGPIED (259 aa)). One can recognise an Ig-like V-type domain in the interval 86-234 (PARAIQVTVS…DLQGNNEAYA (149 aa)). A disulfide bridge connects residues C111 and C218. A helical membrane pass occupies residues 260–280 (WLFVVVVCLAAFLIFLLLGIC). Residues 281–649 (WCQCCPHTCC…LALSRESLVV (369 aa)) are Cytoplasmic-facing. T336 is modified (phosphothreonine). A phosphoserine mark is found at S365, S371, S389, S432, and S436. The segment at 414–649 (NFDPSRPGPP…LALSRESLVV (236 aa)) is disordered. Residues 426–444 (RVERAMSEVTSLHEDDWRS) show a composition bias toward basic and acidic residues. T453 is modified (phosphothreonine). 3 positions are modified to phosphoserine: S464, S467, and S493. T501 is subject to Phosphothreonine. Residues 502 to 518 (PPSTAESGSRSPTSNGG) show a composition bias toward polar residues. S528 and S530 each carry phosphoserine. Residues 529-565 (RSRDDLYDQDDSRDFPRSRDPHYDDFRSRERPPADPR) show a composition bias toward basic and acidic residues. Y535 carries the phosphotyrosine modification. Residues S540 and S579 each carry the phosphoserine modification. Positions 589-609 (RLLEEAVRKKGSEERRRPHKE) are enriched in basic and acidic residues. At S631 the chain carries Phosphoserine. K638 participates in a covalent cross-link: Glycyl lysine isopeptide (Lys-Gly) (interchain with G-Cter in ubiquitin). S643 and S646 each carry phosphoserine.

It belongs to the immunoglobulin superfamily. LISCH7 family. Homotrimer or homotetramer. Assembles into cell-cell contacts. Interacts (via the cytoplasmic domain) with MARVELD2 (via C-terminal cytoplasmic domain); the interaction is required to recruit MARVELD2 to tricellular contacts. Interacts with OCLN. Phosphorylation at Ser-365 by MAPK8/JNK1 and MAPK9/JNK2 may be required for exclusive localization at tricellular tight junstions. In terms of processing, polyubiquitinated at Lys-638 via 'Lys-63'-linked ubiquitin chains; deubiquitinated by USP53.

The protein resides in the cell membrane. It is found in the cell junction. Its subcellular location is the tight junction. In terms of biological role, probable role in the clearance of triglyceride-rich lipoprotein from blood. Binds chylomicrons, LDL and VLDL in presence of free fatty acids and allows their subsequent uptake in the cells. Maintains epithelial barrier function by recruiting MARVELD2/tricellulin to tricellular tight junctions. This chain is Lipolysis-stimulated lipoprotein receptor, found in Homo sapiens (Human).